Reading from the N-terminus, the 1398-residue chain is MKDLLNLLKNQGQVEEFDAIRIGLASPEMIRSWSFGEVKKPETINYRTFKPERDGLFCAKIFGPVKDYECLCGKYKRLKHRGVICEKCGVEVALGKVAAERMGHIELACGLAHIWFLKSLPSRIGLLMDMTLRDIERVLYFESYVVIDPGMTTLEKGQLLNDEQYFEALEEFGDDFDAAMGAEAVRELLHAIDLEHEIGPLREEIPQTNSETKIKKLSKRLKLMEAFQGIGNLPEWMVLTVLPVVPAPLGPLVPLDGGRFATSDLNDLYRRVINRNNRLKRQLDLSAPDIIVRNEKPMLQEAVEPLLDNGACGVAIIGSNKRPLKSLADMIKGKQGLFRQNLLGKRVDYSGRSVISVGPTLRLHQCGLPKKMALELFKPFIFGKLEMRGLATTIKAAKKMVERELPEVWDVLAEVIREHPVLLNRAPTLHRLGIQAFEPVLIEGKAIQLHPLVCARYNADFDGDQMAVDVPLTLEAQLENGALMMSTNNILSPANGEPIIVPSQDVVLGLYYMTREAINAKGEGRVFADLQEVDRVFRAGEAALHAKIKVRINETVKERDGSVVKNTRIVDTTVGRALLFQVVPGGLPYDVVNQPMKKKAISKLINQCYRVVGLKETVIFADQLMYTGFAYSTISGVSIGVNDFVIPDEKARIIGNATDEVKEIESQYASGLVTQGEKYNKVIDLWSKANDEVSKAMMANLSKEKVIDREGKEVEQESFNSMYMMADSGAGGSAAQIRQLAGMRGLMAKPDGSIIETPITANFREGLSVLQYFISTHGARKGLADTALKTANSGYLTRRLVDVAQDLVVTEIDCGTDQGLVMTPHIEGGDVVEPLGERVLGRVIARDVFKPGTEDVIVPAGTLVDEQWVEFIELNSIDEVIVRSPINCETRYGICAKCYGRDLARGHQVNIGEAVGVIAAQSIGEPGTQLTMRTFHIGGAASRTSAADSVQVKNGGMGASRNLKQVERADGNLVAVSRSGELAIADEFGRECEYKLPYGAVISVKEGEKVEAGAIVAKWDPHTHPIVTELKGTVTFVGMEENITIKRQTDELTGLTNIEVLDVKDRPAARRHTLRPAIKMVDAAGKDLYLPGTDVPAQYFLPANALVGVADGAQIGVGDVIARIPQETSKTRDITGGLPRVADLFEARRPKEASILAEVSGTIAFGKETKGKRRLVITPTDGSEPYEELIPKWRHLNVFEGEQVNRGEVISDGPSDPDDILRLLGVSALGKYIDNEIQDVYRLQGVKINDKHIETILRQMLRKVRISESGDSSFIKGDQMEYPGAGRERASASEDKFISKFTRVLLGITKASLSTESFISAASFQETTRVLTEAAVTGKRDYLRGLKENVVVGRLIPAGTGLAYHTERMARRDADKPLRVSASEVEAALTEALNSSGN.

Zn(2+) is bound by residues Cys70, Cys72, Cys85, and Cys88. Residues Asp460, Asp462, and Asp464 each coordinate Mg(2+). Zn(2+) is bound by residues Cys814, Cys888, Cys895, and Cys898.

The protein belongs to the RNA polymerase beta' chain family. The RNAP catalytic core consists of 2 alpha, 1 beta, 1 beta' and 1 omega subunit. When a sigma factor is associated with the core the holoenzyme is formed, which can initiate transcription. Requires Mg(2+) as cofactor. It depends on Zn(2+) as a cofactor.

It carries out the reaction RNA(n) + a ribonucleoside 5'-triphosphate = RNA(n+1) + diphosphate. In terms of biological role, DNA-dependent RNA polymerase catalyzes the transcription of DNA into RNA using the four ribonucleoside triphosphates as substrates. This is DNA-directed RNA polymerase subunit beta' from Pseudomonas putida (Arthrobacter siderocapsulatus).